The sequence spans 156 residues: ATP synthase subunit b (156 aa).

The chain crosses the membrane as a helical span at residues 7-29; the sequence is LLGQAIAFFFFVTFCMKYVWPPL.

Belongs to the ATPase B chain family. As to quaternary structure, F-type ATPases have 2 components, F(1) - the catalytic core - and F(0) - the membrane proton channel. F(1) has five subunits: alpha(3), beta(3), gamma(1), delta(1), epsilon(1). F(0) has three main subunits: a(1), b(2) and c(10-14). The alpha and beta chains form an alternating ring which encloses part of the gamma chain. F(1) is attached to F(0) by a central stalk formed by the gamma and epsilon chains, while a peripheral stalk is formed by the delta and b chains.

The protein resides in the cell inner membrane. Its function is as follows. F(1)F(0) ATP synthase produces ATP from ADP in the presence of a proton or sodium gradient. F-type ATPases consist of two structural domains, F(1) containing the extramembraneous catalytic core and F(0) containing the membrane proton channel, linked together by a central stalk and a peripheral stalk. During catalysis, ATP synthesis in the catalytic domain of F(1) is coupled via a rotary mechanism of the central stalk subunits to proton translocation. Functionally, component of the F(0) channel, it forms part of the peripheral stalk, linking F(1) to F(0). The sequence is that of ATP synthase subunit b from Photobacterium profundum (strain SS9).